Consider the following 141-residue polypeptide: Nucleoside diphosphate kinase (141 aa).

Residues K11, F59, R87, T93, R104, and N114 each coordinate ATP. H117 (pros-phosphohistidine intermediate) is an active-site residue.

This sequence belongs to the NDK family. Homotetramer. Mg(2+) is required as a cofactor.

The protein resides in the cytoplasm. The catalysed reaction is a 2'-deoxyribonucleoside 5'-diphosphate + ATP = a 2'-deoxyribonucleoside 5'-triphosphate + ADP. The enzyme catalyses a ribonucleoside 5'-diphosphate + ATP = a ribonucleoside 5'-triphosphate + ADP. Major role in the synthesis of nucleoside triphosphates other than ATP. The ATP gamma phosphate is transferred to the NDP beta phosphate via a ping-pong mechanism, using a phosphorylated active-site intermediate. The sequence is that of Nucleoside diphosphate kinase from Acidovorax ebreus (strain TPSY) (Diaphorobacter sp. (strain TPSY)).